Here is a 387-residue protein sequence, read N- to C-terminus: Xylose isomerase (387 aa).

Active-site residues include H53 and D56. Mg(2+) is bound by residues E180, E216, H219, D244, D254, D256, and D286.

The protein belongs to the xylose isomerase family. Homotetramer. Mg(2+) is required as a cofactor.

The protein localises to the cytoplasm. The enzyme catalyses alpha-D-xylose = alpha-D-xylulofuranose. In Thermus caldophilus, this protein is Xylose isomerase (xylA).